A 306-amino-acid polypeptide reads, in one-letter code: Ribonuclease Z (306 aa).

Histidine 63, histidine 65, aspartate 67, histidine 68, histidine 141, aspartate 211, and histidine 269 together coordinate Zn(2+). Catalysis depends on aspartate 67, which acts as the Proton acceptor.

Belongs to the RNase Z family. As to quaternary structure, homodimer. It depends on Zn(2+) as a cofactor.

The catalysed reaction is Endonucleolytic cleavage of RNA, removing extra 3' nucleotides from tRNA precursor, generating 3' termini of tRNAs. A 3'-hydroxy group is left at the tRNA terminus and a 5'-phosphoryl group is left at the trailer molecule.. Its function is as follows. Zinc phosphodiesterase, which displays some tRNA 3'-processing endonuclease activity. Probably involved in tRNA maturation, by removing a 3'-trailer from precursor tRNA. The protein is Ribonuclease Z of Staphylococcus epidermidis (strain ATCC 12228 / FDA PCI 1200).